Here is a 528-residue protein sequence, read N- to C-terminus: Bifunctional purine biosynthesis protein PurH (528 aa).

Residues 2 to 149 (TDLAPLRRAL…KNHGFVSVVV (148 aa)) enclose the MGS-like domain.

It belongs to the PurH family.

It catalyses the reaction (6R)-10-formyltetrahydrofolate + 5-amino-1-(5-phospho-beta-D-ribosyl)imidazole-4-carboxamide = 5-formamido-1-(5-phospho-D-ribosyl)imidazole-4-carboxamide + (6S)-5,6,7,8-tetrahydrofolate. It carries out the reaction IMP + H2O = 5-formamido-1-(5-phospho-D-ribosyl)imidazole-4-carboxamide. It functions in the pathway purine metabolism; IMP biosynthesis via de novo pathway; 5-formamido-1-(5-phospho-D-ribosyl)imidazole-4-carboxamide from 5-amino-1-(5-phospho-D-ribosyl)imidazole-4-carboxamide (10-formyl THF route): step 1/1. The protein operates within purine metabolism; IMP biosynthesis via de novo pathway; IMP from 5-formamido-1-(5-phospho-D-ribosyl)imidazole-4-carboxamide: step 1/1. The chain is Bifunctional purine biosynthesis protein PurH from Roseobacter denitrificans (strain ATCC 33942 / OCh 114) (Erythrobacter sp. (strain OCh 114)).